Reading from the N-terminus, the 257-residue chain is Regulator of G-protein signaling 7-binding protein (257 aa).

The tract at residues 1-45 (MSSAPNGRKKRPSRSTRSSIFQISKPPLQSGDWERRGSGSESAHK) is disordered. The span at 32–45 (DWERRGSGSESAHK) shows a compositional bias: basic and acidic residues. Residues 242–247 (RRRKRR) carry the Nuclear localization signal motif. 2 S-palmitoyl cysteine lipidation sites follow: C252 and C253.

The protein belongs to the RGS7BP/RGS9BP family. As to quaternary structure, interacts with 'R7' family proteins RGS6, RGS7, RGS9 and RGS11. Component of some R7-Gbeta5 complex composed of some R7 protein (RGS6, RGS7, RGS9 or RGS11), Gbeta5 (GNB5) and RGS7BP. Post-translationally, palmitoylated. Undergoes rapid palmitoylation turnover. De novo and turnover palmitoylation are both mediated by ZDHHC2. Palmitoylation regulates the cell membrane and nuclear shuttling and the regulation of GPCR signaling. Upon depalmitoylation, it is targeted from the plasma membrane into the nucleus. GPCR signaling inhibits depalmitoylation and promotes localization to the plasma membrane. In terms of tissue distribution, specifically expressed in the central nervous system including the retina but not in other non-neuronal tissues (at protein level).

The protein localises to the nucleus. It localises to the cytoplasm. The protein resides in the cell membrane. Regulator of G protein-coupled receptor (GPCR) signaling. Regulatory subunit of the R7-Gbeta5 complexes that acts by controlling the subcellular location of the R7-Gbeta5 complexes. When palmitoylated, it targets the R7-Gbeta5 complexes to the plasma membrane, leading to inhibit G protein alpha subunits. When it is unpalmitoylated, the R7-Gbeta5 complexes undergo a nuclear/cytoplasmic shuttling. May also act by controlling the proteolytic stability of R7 proteins, probably by protecting them from degradation. In Mus musculus (Mouse), this protein is Regulator of G-protein signaling 7-binding protein (Rgs7bp).